Consider the following 447-residue polypeptide: Tubulin beta-1 chain (447 aa).

GTP is bound by residues Gln-11, Glu-69, Ser-138, Gly-142, Thr-143, Gly-144, Asn-204, and Asn-226. Position 69 (Glu-69) interacts with Mg(2+). Positions 424–447 (QYQDATAEEEGEGDEEEAEGEAAA) are disordered. A compositionally biased stretch (acidic residues) spans 429–447 (TAEEEGEGDEEEAEGEAAA).

This sequence belongs to the tubulin family. In terms of assembly, dimer of alpha and beta chains. A typical microtubule is a hollow water-filled tube with an outer diameter of 25 nm and an inner diameter of 15 nM. Alpha-beta heterodimers associate head-to-tail to form protofilaments running lengthwise along the microtubule wall with the beta-tubulin subunit facing the microtubule plus end conferring a structural polarity. Microtubules usually have 13 protofilaments but different protofilament numbers can be found in some organisms and specialized cells. Requires Mg(2+) as cofactor.

Its subcellular location is the cytoplasm. The protein localises to the cytoskeleton. Functionally, tubulin is the major constituent of microtubules, a cylinder consisting of laterally associated linear protofilaments composed of alpha- and beta-tubulin heterodimers. Microtubules grow by the addition of GTP-tubulin dimers to the microtubule end, where a stabilizing cap forms. Below the cap, tubulin dimers are in GDP-bound state, owing to GTPase activity of alpha-tubulin. This Cyanophora paradoxa protein is Tubulin beta-1 chain (TUBB1).